The following is a 149-amino-acid chain: Ribose-5-phosphate isomerase B (149 aa).

Position 9–10 (9–10 (DH)) interacts with D-ribulose 5-phosphate. Cysteine 66 acts as the Proton acceptor in catalysis. D-ribulose 5-phosphate is bound at residue 67–71 (GTGVG). The active-site Proton donor is histidine 99. Positions 100, 110, 133, and 137 each coordinate D-ribulose 5-phosphate.

Belongs to the LacAB/RpiB family. As to quaternary structure, homodimer, and homotetramer.

The enzyme catalyses aldehydo-D-ribose 5-phosphate = D-ribulose 5-phosphate. It carries out the reaction D-allose 6-phosphate = D-allulose 6-phosphate. It participates in carbohydrate degradation; pentose phosphate pathway; D-ribose 5-phosphate from D-ribulose 5-phosphate (non-oxidative stage): step 1/1. With respect to regulation, inhibited by iodoacetate and glucose 6-phosphate. In terms of biological role, catalyzes the interconversion of ribulose-5-P and ribose-5-P. It probably also has activity on D-allose 6-phosphate. This Escherichia coli (strain K12) protein is Ribose-5-phosphate isomerase B.